The sequence spans 122 residues: Large ribosomal subunit protein uL14 (122 aa).

The protein belongs to the universal ribosomal protein uL14 family. Part of the 50S ribosomal subunit. Forms a cluster with proteins L3 and L19. In the 70S ribosome, L14 and L19 interact and together make contacts with the 16S rRNA in bridges B5 and B8.

Functionally, binds to 23S rRNA. Forms part of two intersubunit bridges in the 70S ribosome. In Geobacter sulfurreducens (strain ATCC 51573 / DSM 12127 / PCA), this protein is Large ribosomal subunit protein uL14.